The primary structure comprises 153 residues: Interleukin-4 (153 aa).

A signal peptide spans 1 to 24 (MGLTSQLLPPLFFLLACAGNFAHG). Disulfide bonds link Cys27/Cys151, Cys48/Cys89, and Cys70/Cys123. Asn62 carries an N-linked (GlcNAc...) asparagine glycan.

This sequence belongs to the IL-4/IL-13 family.

It localises to the secreted. In terms of biological role, participates in at least several B-cell activation processes as well as of other cell types. It is a costimulator of DNA-synthesis. It induces the expression of class II MHC molecules on resting B-cells. It enhances both secretion and cell surface expression of IgE and IgG1. It also regulates the expression of the low affinity Fc receptor for IgE (CD23) on both lymphocytes and monocytes. Positively regulates IL31RA expression in macrophages. Stimulates autophagy in dendritic cells by interfering with mTORC1 signaling and through the induction of RUFY4. In Cercocebus atys (Sooty mangabey), this protein is Interleukin-4 (IL4).